The following is a 536-amino-acid chain: Formate--tetrahydrofolate ligase (536 aa).

51-58 (TAAGEGKT) is an ATP binding site.

The protein belongs to the formate--tetrahydrofolate ligase family.

The catalysed reaction is (6S)-5,6,7,8-tetrahydrofolate + formate + ATP = (6R)-10-formyltetrahydrofolate + ADP + phosphate. Its pathway is one-carbon metabolism; tetrahydrofolate interconversion. In Thermoplasma volcanium (strain ATCC 51530 / DSM 4299 / JCM 9571 / NBRC 15438 / GSS1), this protein is Formate--tetrahydrofolate ligase.